The chain runs to 372 residues: Alanine racemase (372 aa).

The Proton acceptor; specific for D-alanine role is filled by Lys-37. The residue at position 37 (Lys-37) is an N6-(pyridoxal phosphate)lysine. Arg-136 lines the substrate pocket. The Proton acceptor; specific for L-alanine role is filled by Tyr-265. Position 313 (Met-313) interacts with substrate.

It belongs to the alanine racemase family. The cofactor is pyridoxal 5'-phosphate.

The enzyme catalyses L-alanine = D-alanine. The protein operates within amino-acid biosynthesis; D-alanine biosynthesis; D-alanine from L-alanine: step 1/1. In terms of biological role, catalyzes the interconversion of L-alanine and D-alanine. May also act on other amino acids. In Synechocystis sp. (strain ATCC 27184 / PCC 6803 / Kazusa), this protein is Alanine racemase (alr).